We begin with the raw amino-acid sequence, 397 residues long: N(6)-adenosine-methyltransferase non-catalytic subunit METTL14 (397 aa).

Disordered stretches follow at residues 37–67 and 368–397; these read NAED…KKTP and ELLR…GRPR. Polar residues predominate over residues 40 to 51; that stretch reads DINSSRQLNSGG. Positions 382–397 are enriched in basic residues; it reads LRGRGRGFPRGRGRPR.

Belongs to the MT-A70-like family. Component of the WMM complex, a N6-methyltransferase complex composed of a catalytic subcomplex, named MAC, and of an associated subcomplex, named MACOM. The MAC subcomplex is composed of Ime4/Mettl3 and Mettl14. The MACOM subcomplex is composed of fl(2)d, Flacc/Xio, Hakai, vir, and, in some cases of nito.

It is found in the nucleus. Non-catalytic component of the WMM complex, a complex that mediates N6-methyladenosine (m6A) methylation of mRNAs, a modification that plays a role in the efficiency of mRNA splicing and is required for sex determination. In the heterodimer formed with Ime4/Mettl3, Mettl14 constitutes the RNA-binding scaffold that recognizes the substrate rather than the catalytic core. Required for sex determination and dosage compensation via Sxl alternative splicing: m6A methylation acts as a key regulator of Sxl pre-mRNA and promotes female-specific alternative splicing of Sxl, which determines female physiognomy. M6A methylation is also required for neuronal functions. In Drosophila melanogaster (Fruit fly), this protein is N(6)-adenosine-methyltransferase non-catalytic subunit METTL14.